Consider the following 79-residue polypeptide: Protein GOLVEN 2 (79 aa).

The signal sequence occupies residues 1–26; it reads MAIRVSHKSFLVALLLILFISSPTQA. Positions 27–65 are excised as a propeptide; that stretch reads RSLREVVRNRTLLVVEKSQESRKIRHEGGGSDVDGLMDM. The interval 49 to 79 is disordered; that stretch reads KIRHEGGGSDVDGLMDMDYNSANKKRPIHNR. Tyr67 is subject to Sulfotyrosine. The residue at position 75 (Pro75) is a Hydroxyproline.

This sequence belongs to the RGF family. Binds to LRR receptor-like serine/threonine-protein kinases to trigger their dimerization with SERK proteins and subsequent signaling. Expressed in siliques, stems, hypocotyls, shoot apex, leaves, flowers and cotyledons, and, to a lower extent, in roots.

It localises to the secreted. The protein resides in the endoplasmic reticulum. Functionally, signaling peptide (root growth factor) that regulates the pattern of root growth and lateral root development by modulating the length and the number of cortical cells in the root apical meristem (RAM), and the anticlinal asymmetric cell divisions in lateral root initiation cells. Also involved in the regulation of hypocotyl bending and root gravitropism, probably by influencing the formation of auxin gradients. Maintains the postembryonic root stem cell niche. This Arabidopsis thaliana (Mouse-ear cress) protein is Protein GOLVEN 2.